The following is a 447-amino-acid chain: Nuclear envelope integral membrane protein 2 (447 aa).

A signal peptide spans 1 to 28; sequence MGPRRLPWARPGPALGLLLLALAGAVPA. The next 5 helical transmembrane spans lie at 144–164, 173–193, 202–222, 235–255, and 275–295; these read EMLD…FHFA, FFYL…VLLA, STFW…IYCF, IYVL…CYQH, and AFVF…IIAV. Residues 410-438 form a disordered region; sequence TRTESEQDETTSYIHEGDDENEDEIHEPI.

Belongs to the NEMP family.

It localises to the nucleus inner membrane. The sequence is that of Nuclear envelope integral membrane protein 2 (NEMP2) from Gallus gallus (Chicken).